A 539-amino-acid polypeptide reads, in one-letter code: Probable K(+)/H(+) antiporter subunit D (539 aa).

Transmembrane regions (helical) follow at residues Trp-4 to Leu-23, Ala-36 to Ala-58, Phe-78 to Leu-100, Ala-113 to Gly-135, Leu-140 to Leu-162, Leu-175 to Met-197, Met-217 to Leu-239, Ala-251 to Phe-273, Phe-283 to Ala-305, Leu-312 to Gly-331, Met-335 to Ile-357, Val-400 to Ile-422, Ala-442 to Ala-464, and Val-484 to Ala-506.

It belongs to the CPA3 antiporters (TC 2.A.63) subunit D family. As to quaternary structure, may form a hetero-oligomeric complex that consists of six subunits: PhaAB, PhaC, PhaD, PhaE, PhaF and PhaG.

It localises to the cell membrane. Part of a K(+) efflux system which is required for the adaptation of R.meliloti to alkaline pH as well as for the infection process during symbiotic nodule development. This is Probable K(+)/H(+) antiporter subunit D (phaD) from Rhizobium meliloti (strain 1021) (Ensifer meliloti).